The chain runs to 160 residues: SsrA-binding protein (160 aa).

It belongs to the SmpB family.

It is found in the cytoplasm. Functionally, required for rescue of stalled ribosomes mediated by trans-translation. Binds to transfer-messenger RNA (tmRNA), required for stable association of tmRNA with ribosomes. tmRNA and SmpB together mimic tRNA shape, replacing the anticodon stem-loop with SmpB. tmRNA is encoded by the ssrA gene; the 2 termini fold to resemble tRNA(Ala) and it encodes a 'tag peptide', a short internal open reading frame. During trans-translation Ala-aminoacylated tmRNA acts like a tRNA, entering the A-site of stalled ribosomes, displacing the stalled mRNA. The ribosome then switches to translate the ORF on the tmRNA; the nascent peptide is terminated with the 'tag peptide' encoded by the tmRNA and targeted for degradation. The ribosome is freed to recommence translation, which seems to be the essential function of trans-translation. The sequence is that of SsrA-binding protein from Mycobacterium leprae (strain Br4923).